Here is a 4246-residue protein sequence, read N- to C-terminus: Intermembrane lipid transfer protein vps13F (4246 aa).

The Chorein N-terminal domain maps to 2-113 (FESIVSNLLT…LLLQKKLKKL (112 aa)). Disordered regions lie at residues 141 to 271 (IKEK…EDED), 401 to 420 (PKKSSPSTTTTTPPISPPPK), 591 to 759 (KAED…SILG), 914 to 944 (VSSSPSPVSSPSRDKRLEEETKQEDEKEKKL), 964 to 1014 (KKSK…TNDE), 1217 to 1251 (QAQQQAQQQQQSQHPSSNDDNSSSNGGCSVDIKSP), 1356 to 1379 (ISTHFSSKKNAEDENNNSNLDRVD), 1395 to 1436 (YNGV…KSKK), 1622 to 1683 (REKR…KSQS), 2101 to 2131 (LESLHDHKSSSSSSSSSPPPPPPPSSSQQQQ), 2211 to 2237 (HHSKEKNQQSADGSGLSPPLSKDEKEK), 2471 to 2513 (QQQH…KSKQ), 2704 to 2756 (LSTS…QTTK), 3421 to 3449 (IDDDQDSDSDSGSSNSSSPSISSSSTSPL), 3611 to 3652 (KTLN…NNQN), and 3794 to 3813 (NNNNNQNNNNQNNDFNNIDE). The span at 168–201 (NASPVNSNNNNNNNSNLVSESNIPSSSSSSSSSL) shows a compositional bias: low complexity. The segment covering 207–217 (NSSKDANKSDD) has biased composition (basic and acidic residues). The segment covering 218 to 271 (TDMDVDDDDEFQEATEGDYDNEEEQDDHDEEDDLSDDDDDDDDEEDDYEMEDED) has biased composition (acidic residues). Low complexity-rich tracts occupy residues 401-413 (PKKSSPSTTTTTP) and 597-658 (QQQQ…SNST). The segment covering 659–668 (DSKDIMKSSG) has biased composition (basic and acidic residues). Residues 669-680 (DKNVNNNNNMGD) show a composition bias toward low complexity. A compositionally biased stretch (basic and acidic residues) spans 681 to 702 (NENKDNIDKKEENKNDDQDNKN). Composition is skewed to low complexity over residues 725 to 747 (SGGWFKWFGWGSSNKSKQQQQQQ) and 914 to 924 (VSSSPSPVSSP). 2 stretches are compositionally biased toward basic and acidic residues: residues 925–944 (SRDKRLEEETKQEDEKEKKL) and 987–1001 (DKYSTKGTTESREES). Over residues 1217–1241 (QAQQQAQQQQQSQHPSSNDDNSSSN) the composition is skewed to low complexity. Acidic residues predominate over residues 1400–1409 (SDDDNNDDEN). Composition is skewed to basic and acidic residues over residues 1410-1431 (DKTTQDDQDDKEKSSGNDDSLK) and 1622-1634 (REKRKRLEKDKDN). The segment covering 1644–1670 (QQSIPQKQQQQQQQQQQQQQQQQQQQQ) has biased composition (low complexity). 5 stretches are compositionally biased toward low complexity: residues 2471–2506 (QQQHQQQNNNSNNNNNNNNNNNNNNNNNNNNNNNNN), 2705–2755 (STST…TQTT), 3430–3449 (DSGSSNSSSPSISSSSTSPL), 3613–3652 (LNNNNNNNNNNNNNNLNSVTKDNNNNNNQNNNNQNNNNQN), and 3794–3809 (NNNNNQNNNNQNNDFN).

This sequence belongs to the VPS13 family.

It localises to the membrane. Its function is as follows. Mediates the transfer of lipids between membranes at organelle contact sites. The protein is Intermembrane lipid transfer protein vps13F (vps13F) of Dictyostelium discoideum (Social amoeba).